The primary structure comprises 510 residues: MVETVGGKDAVAPAPARSPSPPAKNLDPLNPLLPAYHFVGIGGVGMSALAYILAKQGFRVSGSDIAANGRTRRLEALGVRFIQGHTLEGLAGDPQVVYSSAIRPTNPELAAALDKGLKVWHRADLLAALFNHRPSIGVAGTHGKTTTSSMIGYMLLAAGWDPTLIIGGEMDAWDGNARLGQGEYLVAEVDESDGSLVRLYPQIGVITNIELDHPDHYANLEQVIRAFQQYGQQSQTLVACLDCPNVATHLKVDIGYSLAGHPQAQYQARQILYTADCTSAEIWERGSLLGQLRLQVLGSHNLSNALAAVAVGRQLGLEFAVIASALAEFRGVQRRFEVKGEVGGVTFIDDYAHHPSEIRATLRAARLQQRRVVAVFQPHRHSRLAKLFQDFACCFADAQVVVIVPTYGAGEAAPEGSDSLRLAVSVAEHHPHVRYVSSLPQLPQVLPSILQPGDLAIFLGAGDLNQQIAATMRAYAARLGEQPLANFEGKLPGQAEDGIREMGASEVLAS.

The disordered stretch occupies residues 1–25 (MVETVGGKDAVAPAPARSPSPPAKN). Residue 140–146 (GTHGKTT) coordinates ATP.

This sequence belongs to the MurCDEF family.

Its subcellular location is the cytoplasm. It catalyses the reaction UDP-N-acetyl-alpha-D-muramate + L-alanine + ATP = UDP-N-acetyl-alpha-D-muramoyl-L-alanine + ADP + phosphate + H(+). It participates in cell wall biogenesis; peptidoglycan biosynthesis. In terms of biological role, cell wall formation. This Synechococcus sp. (strain JA-3-3Ab) (Cyanobacteria bacterium Yellowstone A-Prime) protein is UDP-N-acetylmuramate--L-alanine ligase.